The chain runs to 65 residues: Large ribosomal subunit protein uL29 (65 aa).

Belongs to the universal ribosomal protein uL29 family.

This chain is Large ribosomal subunit protein uL29, found in Delftia acidovorans (strain DSM 14801 / SPH-1).